We begin with the raw amino-acid sequence, 594 residues long: UvrABC system protein C (594 aa).

The region spanning 13–99 (NSSGVYQYFD…IKQLKPKYNI (87 aa)) is the GIY-YIG domain. The UVR domain occupies 205–240 (DRLIKELELKMERLSSNLRFEEALIYRDRIAKIQKI).

It belongs to the UvrC family. Interacts with UvrB in an incision complex.

The protein resides in the cytoplasm. In terms of biological role, the UvrABC repair system catalyzes the recognition and processing of DNA lesions. UvrC both incises the 5' and 3' sides of the lesion. The N-terminal half is responsible for the 3' incision and the C-terminal half is responsible for the 5' incision. This Helicobacter pylori (strain G27) protein is UvrABC system protein C.